Reading from the N-terminus, the 714-residue chain is Hormonally up-regulated neu tumor-associated kinase (714 aa).

Positions 1–16 (MPAAAGDGLLGEPAAP) are enriched in low complexity. Positions 1-28 (MPAAAGDGLLGEPAAPGGDGGAEDTTRP) are disordered. One can recognise a Protein kinase domain in the interval 62 to 320 (LIGSRKLGEG…IQQALANRWL (259 aa)). ATP-binding positions include 68-76 (LGEGSFAKV) and lysine 91. Aspartate 186 (proton acceptor) is an active-site residue. Positions 624–635 (HEEKNSPPKEEG) are enriched in basic and acidic residues. Disordered regions lie at residues 624-658 (HEEK…NCVK) and 674-714 (KRHQ…KGQC). Residues 692 to 703 (SPLQPTAPSSLS) show a composition bias toward polar residues.

This sequence belongs to the protein kinase superfamily. CAMK Ser/Thr protein kinase family. SNF1 subfamily.

It carries out the reaction L-seryl-[protein] + ATP = O-phospho-L-seryl-[protein] + ADP + H(+). The catalysed reaction is L-threonyl-[protein] + ATP = O-phospho-L-threonyl-[protein] + ADP + H(+). This Mus musculus (Mouse) protein is Hormonally up-regulated neu tumor-associated kinase (Hunk).